We begin with the raw amino-acid sequence, 126 residues long: S-adenosylmethionine decarboxylase proenzyme (126 aa).

Residue S63 is the Schiff-base intermediate with substrate; via pyruvic acid of the active site. S63 is subject to Pyruvic acid (Ser); by autocatalysis. The active-site Proton acceptor; for processing activity is the H68. C83 (proton donor; for catalytic activity) is an active-site residue.

It belongs to the prokaryotic AdoMetDC family. Type 1 subfamily. In terms of assembly, heterotetramer of two alpha and two beta chains arranged as a dimer of alpha/beta heterodimers. Pyruvate serves as cofactor. Is synthesized initially as an inactive proenzyme. Formation of the active enzyme involves a self-maturation process in which the active site pyruvoyl group is generated from an internal serine residue via an autocatalytic post-translational modification. Two non-identical subunits are generated from the proenzyme in this reaction, and the pyruvate is formed at the N-terminus of the alpha chain, which is derived from the carboxyl end of the proenzyme. The post-translation cleavage follows an unusual pathway, termed non-hydrolytic serinolysis, in which the side chain hydroxyl group of the serine supplies its oxygen atom to form the C-terminus of the beta chain, while the remainder of the serine residue undergoes an oxidative deamination to produce ammonia and the pyruvoyl group blocking the N-terminus of the alpha chain.

It carries out the reaction S-adenosyl-L-methionine + H(+) = S-adenosyl 3-(methylsulfanyl)propylamine + CO2. It functions in the pathway amine and polyamine biosynthesis; S-adenosylmethioninamine biosynthesis; S-adenosylmethioninamine from S-adenosyl-L-methionine: step 1/1. Its function is as follows. Catalyzes the decarboxylation of S-adenosylmethionine to S-adenosylmethioninamine (dcAdoMet), the propylamine donor required for the synthesis of the polyamines spermine and spermidine from the diamine putrescine. The sequence is that of S-adenosylmethionine decarboxylase proenzyme from Clostridium kluyveri (strain NBRC 12016).